The primary structure comprises 670 residues: Leucine-rich repeat-containing protein 45 (670 aa).

LRR repeat units follow at residues 58–80, 87–107, 115–136, 145–166, 173–194, and 201–212; these read TLCTELVLSDCMLSEEGATLLLR, VLRFLDLKGNNLRAAGAEALG, SIQSLTLEWNSLGTWDDAFATF, ALQRLDLRNNQISHKGAEELAL, TLQQLDLRWNNVGLLGGRALMN, and TLWRLDLAGNNI. A coiled-coil region spans residues 252-645; that stretch reads REEKSKQFLD…IARIRDEEAQ (394 aa). Serine 661 bears the Phosphoserine; by NEK2 mark.

As to quaternary structure, homomer. Interacts with CROCC/rootletin and CEP250. Interacts with CEP44. Interacts with CCDC102B (via N-terminus). Phosphorylated by NEK2 during misosis, phosphorylation reduces centrosomal localization which subsequently leads to centrosome separation.

The protein resides in the cytoplasm. It is found in the cytoskeleton. It localises to the microtubule organizing center. Its subcellular location is the centrosome. In terms of biological role, component of the proteinaceous fiber-like linker between two centrioles, required for centrosome cohesion. This Homo sapiens (Human) protein is Leucine-rich repeat-containing protein 45 (LRRC45).